The following is a 71-amino-acid chain: Protein KleB (71 aa).

Positions Ile9–Ile28 form a DNA-binding region, H-T-H motif.

This is Protein KleB (kleB) from Escherichia coli.